The following is a 339-amino-acid chain: Probable G-protein coupled receptor 33 (339 aa).

The Extracellular segment spans residues 1–30 (MDRVNSSGHVISVSPSLTNSTGVPTPAPKA). Asn5 and Asn19 each carry an N-linked (GlcNAc...) asparagine glycan. The chain crosses the membrane as a helical span at residues 31-53 (IIAAALFMSFIVGTISNGLYLWM). Topologically, residues 54-64 (LKFKMQRTVNT) are cytoplasmic. Residues 65–86 (LLFFHLILSYFISTLILPFMAT) form a helical membrane-spanning segment. The Extracellular portion of the chain corresponds to 87–103 (SFLQDNHWAFGSVLCKV). A disulfide bridge links Cys101 with Cys179. Residues 104 to 124 (FNSTLSVSMFASVFFLSAISV) form a helical membrane-spanning segment. At 125-143 (DRYHLTLHPVWSQQHRTPR) the chain is on the cytoplasmic side. A helical membrane pass occupies residues 144–165 (WASRIALRIWILATILSIPYLV). The Extracellular segment spans residues 166–209 (FRETHDDHKGRIKCQNNYIVGTNWESSEHQTLGQWIHAACFGRR). Residues 210–230 (FLLGFLLPFLVIVFCYKRVAT) traverse the membrane as a helical segment. The Cytoplasmic portion of the chain corresponds to 231 to 246 (KMKDKGLFKSSKPFKV). The chain crosses the membrane as a helical span at residues 247–268 (MLTAVVSFFVCWMPYHVHSGLV). Over 269–283 (LTKSQPLPSQLTLGL) the chain is Extracellular. Residues 284-303 (AVVTISFNTVVSPILYLFTG) traverse the membrane as a helical segment. The Cytoplasmic segment spans residues 304–339 (ENFEVFKKSILALFKSTFSDSSATERTQTLNSETEI).

This sequence belongs to the G-protein coupled receptor 1 family.

It is found in the cell membrane. In terms of biological role, orphan receptor; could be a chemoattractant receptor. The polypeptide is Probable G-protein coupled receptor 33 (Gpr33) (Rattus rattus (Black rat)).